A 382-amino-acid chain; its full sequence is V-type proton ATPase subunit C 1 (382 aa).

At T2 the chain carries N-acetylthreonine.

This sequence belongs to the V-ATPase C subunit family. V-ATPase is a heteromultimeric enzyme made up of two complexes: the ATP-hydrolytic V1 complex and the proton translocation V0 complex. The V1 complex consists of three catalytic AB heterodimers that form a heterohexamer, three peripheral stalks each consisting of EG heterodimers, one central rotor including subunits D and F, and the regulatory subunits C and H. The proton translocation complex V0 consists of the proton transport subunit a, a ring of proteolipid subunits c9c'', rotary subunit d, subunits e and f, and the accessory subunits ATP6AP1/Ac45 and ATP6AP2/PRR.

It localises to the cytoplasmic vesicle. It is found in the secretory vesicle. The protein resides in the synaptic vesicle membrane. Its subcellular location is the clathrin-coated vesicle membrane. Subunit of the V1 complex of vacuolar(H+)-ATPase (V-ATPase), a multisubunit enzyme composed of a peripheral complex (V1) that hydrolyzes ATP and a membrane integral complex (V0) that translocates protons. V-ATPase is responsible for acidifying and maintaining the pH of intracellular compartments and in some cell types, is targeted to the plasma membrane, where it is responsible for acidifying the extracellular environment. Subunit C is necessary for the assembly of the catalytic sector of the enzyme and is likely to have a specific function in its catalytic activity. This Macaca fascicularis (Crab-eating macaque) protein is V-type proton ATPase subunit C 1 (ATP6V1C1).